The primary structure comprises 455 residues: tRNA modification GTPase MnmE (455 aa).

The (6S)-5-formyl-5,6,7,8-tetrahydrofolate site is built by Arg-24, Glu-81, and Lys-120. A TrmE-type G domain is found at 216–378 (GMTVVIAGRP…LREHLKHCMG (163 aa)). Residue Asn-226 participates in K(+) binding. GTP is bound by residues 226–231 (NAGKSS), 245–251 (TDIAGTT), 270–273 (DTAG), and 335–338 (NKAD). Ser-230 contributes to the Mg(2+) binding site. K(+) is bound by residues Thr-245, Ile-247, and Thr-250. Thr-251 serves as a coordination point for Mg(2+). Lys-455 is a binding site for (6S)-5-formyl-5,6,7,8-tetrahydrofolate.

This sequence belongs to the TRAFAC class TrmE-Era-EngA-EngB-Septin-like GTPase superfamily. TrmE GTPase family. In terms of assembly, homodimer. Heterotetramer of two MnmE and two MnmG subunits. K(+) is required as a cofactor.

The protein localises to the cytoplasm. Exhibits a very high intrinsic GTPase hydrolysis rate. Involved in the addition of a carboxymethylaminomethyl (cmnm) group at the wobble position (U34) of certain tRNAs, forming tRNA-cmnm(5)s(2)U34. The chain is tRNA modification GTPase MnmE from Stutzerimonas stutzeri (strain A1501) (Pseudomonas stutzeri).